An 85-amino-acid chain; its full sequence is ATP synthase subunit c (85 aa).

The next 2 helical transmembrane spans lie at 10–30 (IAVG…FAIL) and 53–73 (FIIA…ALLF).

It belongs to the ATPase C chain family. In terms of assembly, F-type ATPases have 2 components, F(1) - the catalytic core - and F(0) - the membrane proton channel. F(1) has five subunits: alpha(3), beta(3), gamma(1), delta(1), epsilon(1). F(0) has three main subunits: a(1), b(2) and c(10-14). The alpha and beta chains form an alternating ring which encloses part of the gamma chain. F(1) is attached to F(0) by a central stalk formed by the gamma and epsilon chains, while a peripheral stalk is formed by the delta and b chains.

It localises to the cell inner membrane. Its function is as follows. F(1)F(0) ATP synthase produces ATP from ADP in the presence of a proton or sodium gradient. F-type ATPases consist of two structural domains, F(1) containing the extramembraneous catalytic core and F(0) containing the membrane proton channel, linked together by a central stalk and a peripheral stalk. During catalysis, ATP synthesis in the catalytic domain of F(1) is coupled via a rotary mechanism of the central stalk subunits to proton translocation. Functionally, key component of the F(0) channel; it plays a direct role in translocation across the membrane. A homomeric c-ring of between 10-14 subunits forms the central stalk rotor element with the F(1) delta and epsilon subunits. The protein is ATP synthase subunit c of Aliivibrio salmonicida (strain LFI1238) (Vibrio salmonicida (strain LFI1238)).